Reading from the N-terminus, the 552-residue chain is Hydroxylamine reductase (552 aa).

[2Fe-2S] cluster-binding residues include Cys3, Cys6, Cys18, and Cys25. Hybrid [4Fe-2O-2S] cluster contacts are provided by His250, Glu274, Cys318, Cys406, Cys434, Cys459, Glu493, and Lys495. Cys406 carries the cysteine persulfide modification.

It belongs to the HCP family. [2Fe-2S] cluster serves as cofactor. The cofactor is hybrid [4Fe-2O-2S] cluster.

The protein resides in the cytoplasm. The enzyme catalyses A + NH4(+) + H2O = hydroxylamine + AH2 + H(+). Its function is as follows. Catalyzes the reduction of hydroxylamine to form NH(3) and H(2)O. This Shewanella sediminis (strain HAW-EB3) protein is Hydroxylamine reductase.